A 481-amino-acid polypeptide reads, in one-letter code: WD repeat-containing protein 55 homolog (481 aa).

The tract at residues 1–116 (MHTHNHFKTP…NRDVETNFDL (116 aa)) is disordered. Composition is skewed to acidic residues over residues 12-23 (DAEEVDDLDDEM), 31-46 (IEQE…DDGF), and 68-81 (DSFD…DSDD). WD repeat units follow at residues 144–183 (KLED…NKLI), 188–227 (VHSK…LKKL), 231–269 (AHDD…HVFE), 272–311 (QIDD…LYVQ), 314–353 (PYEE…YHCD), and 398–437 (QHNM…DFGD).

It belongs to the WD repeat WDR55 family.

The sequence is that of WD repeat-containing protein 55 homolog from Drosophila ananassae (Fruit fly).